Reading from the N-terminus, the 170-residue chain is Translationally-controlled tumor protein homolog (170 aa).

Positions 1 to 170 (MIIYKDLLSG…FKDGLEIEKC (170 aa)) constitute a TCTP domain.

Belongs to the TCTP family.

The protein localises to the cytoplasm. Involved in calcium binding and microtubule stabilization. In Scophthalmus maximus (Turbot), this protein is Translationally-controlled tumor protein homolog (tpt1).